The primary structure comprises 201 residues: Elongation factor Ts (201 aa).

An involved in Mg(2+) ion dislocation from EF-Tu region spans residues 81–84 (TDFV).

This sequence belongs to the EF-Ts family.

Its subcellular location is the cytoplasm. In terms of biological role, associates with the EF-Tu.GDP complex and induces the exchange of GDP to GTP. It remains bound to the aminoacyl-tRNA.EF-Tu.GTP complex up to the GTP hydrolysis stage on the ribosome. The chain is Elongation factor Ts from Syntrophus aciditrophicus (strain SB).